The primary structure comprises 356 residues: MRGNVLIMAGGTGGHVFPALACAREFQTRGYAVHWLGTSRGIENELVPQAGLPLHLINVSGLRGKGKLSLLKAPFQLLRSLLQARRIVRELQPVCVLGMGGYVTGPGGLAARLAGVPLVIHEQNAVAGTANRLLSRIATRICEAFPNTFGASDKRRTTGNPVREELFLETPREPLVGRKPKLLVLGGSLGAEPLNKLLPAALAELPTELRPQVFHQAGKQHAEVTAERYRDAAVEAEVAPFIKDMARAYGWADLVICRAGALTVSELAAAGLPSFLVPLPHAIDDHQSRNAEYLAKEGAAVLLPQHATDAAKLAAQLTEVLMHLEKLNVMGATARRLAKPDATRTVVDICQEVMRG.

Residues 12-14, asparagine 124, arginine 163, serine 188, isoleucine 242, 261-266, and glutamine 287 contribute to the UDP-N-acetyl-alpha-D-glucosamine site; these read TGG and ALTVSE.

The protein belongs to the glycosyltransferase 28 family. MurG subfamily.

The protein resides in the cell inner membrane. The catalysed reaction is di-trans,octa-cis-undecaprenyl diphospho-N-acetyl-alpha-D-muramoyl-L-alanyl-D-glutamyl-meso-2,6-diaminopimeloyl-D-alanyl-D-alanine + UDP-N-acetyl-alpha-D-glucosamine = di-trans,octa-cis-undecaprenyl diphospho-[N-acetyl-alpha-D-glucosaminyl-(1-&gt;4)]-N-acetyl-alpha-D-muramoyl-L-alanyl-D-glutamyl-meso-2,6-diaminopimeloyl-D-alanyl-D-alanine + UDP + H(+). The protein operates within cell wall biogenesis; peptidoglycan biosynthesis. Its function is as follows. Cell wall formation. Catalyzes the transfer of a GlcNAc subunit on undecaprenyl-pyrophosphoryl-MurNAc-pentapeptide (lipid intermediate I) to form undecaprenyl-pyrophosphoryl-MurNAc-(pentapeptide)GlcNAc (lipid intermediate II). This Ectopseudomonas mendocina (strain ymp) (Pseudomonas mendocina) protein is UDP-N-acetylglucosamine--N-acetylmuramyl-(pentapeptide) pyrophosphoryl-undecaprenol N-acetylglucosamine transferase.